Reading from the N-terminus, the 617-residue chain is Syncytin-A (617 aa).

Positions 1-17 are cleaved as a signal peptide; the sequence is MVRPWVFCLLLFPCSSA. Topologically, residues 18–544 are extracellular; it reads YSDSWMPLVN…WIQWLGLGPW (527 aa). Asn27 is a glycosylation site (N-linked (GlcNAc...) asparagine). The short motif at 44-47 is the CXXC element; the sequence is CWVC. Disulfide bonds link Cys44-Cys47, Cys44-Cys505, and Cys497-Cys504. 2 N-linked (GlcNAc...) asparagine glycosylation sites follow: Asn272 and Asn365. Residues 420 to 440 are fusion peptide; the sequence is LLPLLAGLGIASALGLGIAGI. The short motif at 497–505 is the CX6CC element; that stretch reads CLFLQEECC. The chain crosses the membrane as a helical span at residues 545-565; that stretch reads LPSWLTSLMAPILFILVLLVF. Topologically, residues 566–617 are cytoplasmic; it reads RPCLLNCLTHSVSRRMSSFIHTTTEGHVDKILLLRESQYKRLPQEPPEEDAV.

Belongs to the gamma type-C retroviral envelope protein family. In terms of assembly, the mature protein consists of a trimer of SU-TM heterodimers. The SU-TM heterodimers are attached by a labile interchain disulfide bond. Post-translationally, synthesized as an inactive precursor that is heavily N-glycosylated and processed likely by furin in the Golgi to yield the mature SU and TM proteins. The cleavage site between SU and TM requires the minimal sequence [KR]-X-[KR]-R. In terms of processing, the CXXC motif is highly conserved across a broad range of retroviral envelope proteins. It is thought to participate in the formation of a labile disulfide bond possibly with the CX6CC motif present in the transmembrane protein. Isomerization of the intersubunit disulfide bond to an SU intrachain disulfide bond is thought to occur upon receptor recognition in order to allow membrane fusion. As to expression, highly expressed in placenta where it localizes to syncytiotrophoblasts of the labyrinthine zona. Specifically localizes to syncytiotrophoblast layer I (SynT-I). Also detected at very low levels in hippocampus, brain, testis and ovary.

It is found in the cell membrane. This endogenous retroviral envelope protein has retained its original fusogenic properties. Together with Synb, participates in trophoblast fusion and the formation of a syncytium during placenta morphogenesis. Syna is essential for placental development and is specifically required for formation of syncytiotrophoblast layer I (SynT-I). Promotes muscle myoblast fusion. Does not have immunosuppressive activity. This is Syncytin-A from Mus musculus (Mouse).